Reading from the N-terminus, the 288-residue chain is Acetyl-coenzyme A carboxylase carboxyl transferase subunit beta (288 aa).

Residues Leu-32–Arg-288 enclose the CoA carboxyltransferase N-terminal domain. 4 residues coordinate Zn(2+): Cys-36, Cys-39, Cys-55, and Cys-58. The C4-type zinc finger occupies Cys-36–Cys-58.

It belongs to the AccD/PCCB family. In terms of assembly, acetyl-CoA carboxylase is a heterohexamer composed of biotin carboxyl carrier protein (AccB), biotin carboxylase (AccC) and two subunits each of ACCase subunit alpha (AccA) and ACCase subunit beta (AccD). The cofactor is Zn(2+).

It localises to the cytoplasm. The enzyme catalyses N(6)-carboxybiotinyl-L-lysyl-[protein] + acetyl-CoA = N(6)-biotinyl-L-lysyl-[protein] + malonyl-CoA. Its pathway is lipid metabolism; malonyl-CoA biosynthesis; malonyl-CoA from acetyl-CoA: step 1/1. Component of the acetyl coenzyme A carboxylase (ACC) complex. Biotin carboxylase (BC) catalyzes the carboxylation of biotin on its carrier protein (BCCP) and then the CO(2) group is transferred by the transcarboxylase to acetyl-CoA to form malonyl-CoA. The chain is Acetyl-coenzyme A carboxylase carboxyl transferase subunit beta from Ruminiclostridium cellulolyticum (strain ATCC 35319 / DSM 5812 / JCM 6584 / H10) (Clostridium cellulolyticum).